The chain runs to 102 residues: Large ribosomal subunit protein bL21 (102 aa).

This sequence belongs to the bacterial ribosomal protein bL21 family. Part of the 50S ribosomal subunit. Contacts protein L20.

This protein binds to 23S rRNA in the presence of protein L20. The sequence is that of Large ribosomal subunit protein bL21 from Bacillus velezensis (strain DSM 23117 / BGSC 10A6 / LMG 26770 / FZB42) (Bacillus amyloliquefaciens subsp. plantarum).